A 452-amino-acid chain; its full sequence is Chromosomal replication initiator protein DnaA (452 aa).

The domain I, interacts with DnaA modulators stretch occupies residues 1–80 (MSSTVSTLWR…NNDQFMVKIQ (80 aa)). A domain II region spans residues 80-114 (QDGIKPTEKTTTNVEQKTQNENCHNEITSQQNYRS). Residues 115–332 (YLNKNHVFDN…GALNRVHAHA (218 aa)) are domain III, AAA+ region. Residues Gly160, Gly162, Lys163, and Thr164 each coordinate ATP. The segment at 333–452 (EFTGKAITID…WSNLIRTLSV (120 aa)) is domain IV, binds dsDNA.

It belongs to the DnaA family. Oligomerizes as a right-handed, spiral filament on DNA at oriC.

The protein resides in the cytoplasm. Plays an essential role in the initiation and regulation of chromosomal replication. ATP-DnaA binds to the origin of replication (oriC) to initiate formation of the DNA replication initiation complex once per cell cycle. Binds the DnaA box (a 9 base pair repeat at the origin) and separates the double-stranded (ds)DNA. Forms a right-handed helical filament on oriC DNA; dsDNA binds to the exterior of the filament while single-stranded (ss)DNA is stabiized in the filament's interior. The ATP-DnaA-oriC complex binds and stabilizes one strand of the AT-rich DNA unwinding element (DUE), permitting loading of DNA polymerase. After initiation quickly degrades to an ADP-DnaA complex that is not apt for DNA replication. Binds acidic phospholipids. The protein is Chromosomal replication initiator protein DnaA of Histophilus somni (strain 129Pt) (Haemophilus somnus).